We begin with the raw amino-acid sequence, 144 residues long: Large ribosomal subunit protein uL11 (144 aa).

Belongs to the universal ribosomal protein uL11 family. As to quaternary structure, part of the ribosomal stalk of the 50S ribosomal subunit. Interacts with L10 and the large rRNA to form the base of the stalk. L10 forms an elongated spine to which L12 dimers bind in a sequential fashion forming a multimeric L10(L12)X complex. Post-translationally, one or more lysine residues are methylated.

Its function is as follows. Forms part of the ribosomal stalk which helps the ribosome interact with GTP-bound translation factors. The chain is Large ribosomal subunit protein uL11 from Nocardia farcinica (strain IFM 10152).